Reading from the N-terminus, the 88-residue chain is MGTARFLRAVLLLSVLLMVTFPALLSAEHHDGRVDICRLPSDSGECSRFFGMWYFDGTTCTKFVYGGYGGNDNRFPTEKACMKRCAKA.

The first 27 residues, 1-27 (MGTARFLRAVLLLSVLLMVTFPALLSA), serve as a signal peptide directing secretion. Positions 28-33 (EHHDGR) are excised as a propeptide. Positions 37-85 (CRLPSDSGECSRFFGMWYFDGTTCTKFVYGGYGGNDNRFPTEKACMKRC) constitute a BPTI/Kunitz inhibitor domain. 2 disulfide bridges follow: Cys37–Cys85 and Cys60–Cys81.

Belongs to the venom Kunitz-type family. 03 (sub-Kunitz) subfamily. In terms of tissue distribution, expressed by the venom gland.

Its subcellular location is the secreted. Its function is as follows. Serine protease inhibitor that inhibits trypsin at a molar ratio of 1:1. This chain is Kunitz-type U15-theraphotoxin-Hhn1d, found in Cyriopagopus hainanus (Chinese bird spider).